The chain runs to 178 residues: ATP-dependent protease subunit HslV (178 aa).

Residue T7 is part of the active site. Na(+)-binding residues include G162, C165, and T168.

The protein belongs to the peptidase T1B family. HslV subfamily. As to quaternary structure, a double ring-shaped homohexamer of HslV is capped on each side by a ring-shaped HslU homohexamer. The assembly of the HslU/HslV complex is dependent on binding of ATP.

The protein resides in the cytoplasm. The catalysed reaction is ATP-dependent cleavage of peptide bonds with broad specificity.. Its activity is regulated as follows. Allosterically activated by HslU binding. Its function is as follows. Protease subunit of a proteasome-like degradation complex believed to be a general protein degrading machinery. The chain is ATP-dependent protease subunit HslV from Cupriavidus metallidurans (strain ATCC 43123 / DSM 2839 / NBRC 102507 / CH34) (Ralstonia metallidurans).